The sequence spans 380 residues: Serpin B7 (380 aa).

Residues S217 and S223 each carry the phosphoserine modification.

This sequence belongs to the serpin family. Ov-serpin subfamily. In terms of tissue distribution, predominantly expressed in mesangial cells. Expressed in the epidermis of the whole body.

The protein localises to the cytoplasm. Might function as an inhibitor of Lys-specific proteases. Might influence the maturation of megakaryocytes via its action as a serpin. This is Serpin B7 (SERPINB7) from Homo sapiens (Human).